Reading from the N-terminus, the 89-residue chain is Small ribosomal subunit protein uS15 (89 aa).

The disordered stretch occupies residues 1–23 (MTLNTQEKQKLINTHQNHGTDTG).

This sequence belongs to the universal ribosomal protein uS15 family. As to quaternary structure, part of the 30S ribosomal subunit. Forms a bridge to the 50S subunit in the 70S ribosome, contacting the 23S rRNA.

Functionally, one of the primary rRNA binding proteins, it binds directly to 16S rRNA where it helps nucleate assembly of the platform of the 30S subunit by binding and bridging several RNA helices of the 16S rRNA. Its function is as follows. Forms an intersubunit bridge (bridge B4) with the 23S rRNA of the 50S subunit in the ribosome. The chain is Small ribosomal subunit protein uS15 from Prochlorococcus marinus (strain MIT 9211).